The chain runs to 204 residues: MKSTIFFALFLVCAFTISYLPSATAQFVLDTDDDPLQNGGTYYMLPVMRGKSGGIEGNSTGKEICPLTVVQSPNKHNKGIGLVFKSPLHALFIAERYPLSIKFDSFAVIPLCGVMPTKWAIVEREGLQAVTLAARDTVDGWFNIERVSREYNDYYKLVFCPQEAEDNKCEDIGIQIDNDGIRRLVLSKNKPLVVEFQKFRSSTA.

The N-terminal stretch at 1–25 is a signal peptide; that stretch reads MKSTIFFALFLVCAFTISYLPSATA. Cystine bridges form between cysteine 65/cysteine 112 and cysteine 160/cysteine 169.

Belongs to the protease inhibitor I3 (leguminous Kunitz-type inhibitor) family. Seed, and at low levels in leaf, root, and stem.

Its function is as follows. Has probably no trypsin inhibitor activity. KTi2 is responsible for most of the Kunitz trypsin inhibitor activity and protein found in soybean seeds. The chain is Kunitz-type trypsin inhibitor KTI2 (KTI2) from Glycine max (Soybean).